Here is a 316-residue protein sequence, read N- to C-terminus: Transaldolase (316 aa).

The Schiff-base intermediate with substrate role is filled by K132.

It belongs to the transaldolase family. Type 1 subfamily. In terms of assembly, homodimer.

Its subcellular location is the cytoplasm. The enzyme catalyses D-sedoheptulose 7-phosphate + D-glyceraldehyde 3-phosphate = D-erythrose 4-phosphate + beta-D-fructose 6-phosphate. It functions in the pathway carbohydrate degradation; pentose phosphate pathway; D-glyceraldehyde 3-phosphate and beta-D-fructose 6-phosphate from D-ribose 5-phosphate and D-xylulose 5-phosphate (non-oxidative stage): step 2/3. Transaldolase is important for the balance of metabolites in the pentose-phosphate pathway. The protein is Transaldolase of Aliivibrio fischeri (strain ATCC 700601 / ES114) (Vibrio fischeri).